Reading from the N-terminus, the 110-residue chain is UPF0213 protein DP2720 (110 aa).

The GIY-YIG domain occupies 12 to 88 (PAWFVYIVQC…KQLSPTRKRT (77 aa)).

The protein belongs to the UPF0213 family.

This is UPF0213 protein DP2720 from Desulfotalea psychrophila (strain LSv54 / DSM 12343).